A 503-amino-acid polypeptide reads, in one-letter code: Maturase K (503 aa).

This sequence belongs to the intron maturase 2 family. MatK subfamily.

The protein localises to the plastid. It is found in the chloroplast. In terms of biological role, usually encoded in the trnK tRNA gene intron. Probably assists in splicing its own and other chloroplast group II introns. The protein is Maturase K of Kunzea baxteri (Scarlet kunzea).